A 334-amino-acid polypeptide reads, in one-letter code: Ferrochelatase 1 (334 aa).

Histidine 201 and glutamate 282 together coordinate Fe cation.

The protein belongs to the ferrochelatase family.

The protein resides in the cytoplasm. It catalyses the reaction heme b + 2 H(+) = protoporphyrin IX + Fe(2+). Its pathway is porphyrin-containing compound metabolism; protoheme biosynthesis; protoheme from protoporphyrin-IX: step 1/1. Its function is as follows. Catalyzes the ferrous insertion into protoporphyrin IX. This Shewanella oneidensis (strain ATCC 700550 / JCM 31522 / CIP 106686 / LMG 19005 / NCIMB 14063 / MR-1) protein is Ferrochelatase 1.